A 467-amino-acid polypeptide reads, in one-letter code: MAPKLLLLLCLFSGLHARSRKVEEDEYEDSSSNQKWVLAPKSQDTDVTLILNKLLREYDKKLRPDIGIKPTVIDVDIYVNSIGPVSSINMEYQIDIFFAQTWTDSRLRFNSTMKILTLNSNMVGLIWIPDTIFRNSKTAEAHWITTPNQLLRIWNDGKILYTLRLTINAECQLQLHNFPMDEHSCPLIFSSYGYPKEEMIYRWRKNSVEAADQKSWRLYQFDFMGLRNTTEIVTTSAGDYVVMTIYFELSRRMGYFTIQTYIPCILTVVLSWVSFWIKKDATPARTALGITTVLTMTTLSTIARKSLPRVSYVTAMDLFVTVCFLFVFAALMEYATLNYYSSCRKPTTTKKTTSLLHPDSSRWIPERISLQAPSNYSLLDMRPPPTAMITLNNSVYWQEFEDTCVYECLDGKDCQSFFCCYEECKSGSWRKGRIHIDILELDSYSRVFFPTSFLLFNLVYWVGYLYL.

The first 17 residues, 1 to 17 (MAPKLLLLLCLFSGLHA), serve as a signal peptide directing secretion. Topologically, residues 18–256 (RSRKVEEDEY…FELSRRMGYF (239 aa)) are extracellular. The N-linked (GlcNAc...) asparagine glycan is linked to Asn110. A disulfide bridge links Cys171 with Cys185. Asn228 carries N-linked (GlcNAc...) asparagine glycosylation. Residues 257-277 (TIQTYIPCILTVVLSWVSFWI) form a helical membrane-spanning segment. Residues 278 to 283 (KKDATP) are Cytoplasmic-facing. A helical transmembrane segment spans residues 284-303 (ARTALGITTVLTMTTLSTIA). Over 304-311 (RKSLPRVS) the chain is Extracellular. The chain crosses the membrane as a helical span at residues 312-332 (YVTAMDLFVTVCFLFVFAALM). The Cytoplasmic portion of the chain corresponds to 333–446 (EYATLNYYSS…DILELDSYSR (114 aa)). The helical transmembrane segment at 447–467 (VFFPTSFLLFNLVYWVGYLYL) threads the bilayer.

This sequence belongs to the ligand-gated ion channel (TC 1.A.9) family. Gamma-aminobutyric acid receptor (TC 1.A.9.5) subfamily. GABRG3 sub-subfamily. In terms of assembly, heteropentamer, formed by a combination of alpha (GABRA1-6), beta (GABRB1-3), gamma (GABRG1-3), delta (GABRD), epsilon (GABRE), rho (GABRR1-3), pi (GABRP) and theta (GABRQ) chains, each subunit exhibiting distinct physiological and pharmacological properties. Post-translationally, may be palmitoylated. As to expression, expressed in brain.

It is found in the postsynaptic cell membrane. The protein resides in the cell membrane. The enzyme catalyses chloride(in) = chloride(out). Gamma subunit of the heteropentameric ligand-gated chloride channel gated by gamma-aminobutyric acid (GABA), a major inhibitory neurotransmitter in the brain. GABA-gated chloride channels, also named GABA(A) receptors (GABAAR), consist of five subunits arranged around a central pore and contain GABA active binding site(s) located at the alpha and beta subunit interface(s). When activated by GABA, GABAARs selectively allow the flow of chloride across the cell membrane down their electrochemical gradient. The chain is Gamma-aminobutyric acid receptor subunit gamma-3 from Homo sapiens (Human).